An 845-amino-acid chain; its full sequence is Beta-galactosidase 11 (845 aa).

A signal peptide spans 1–26; that stretch reads MRKHSLDRWLLTAVLVVLLSSSSSFA. Asparagine 104 carries an N-linked (GlcNAc...) asparagine glycan. Glutamate 197 (proton donor) is an active-site residue. The active-site Nucleophile is glutamate 268. Residues asparagine 269, asparagine 300, asparagine 395, asparagine 752, asparagine 784, and asparagine 814 are each glycosylated (N-linked (GlcNAc...) asparagine). In terms of domain architecture, SUEL-type lectin spans 751–840; that stretch reads DNVSLTATLK…KMLAVQVKCG (90 aa).

Belongs to the glycosyl hydrolase 35 family.

The protein localises to the secreted. The protein resides in the extracellular space. It is found in the apoplast. It catalyses the reaction Hydrolysis of terminal non-reducing beta-D-galactose residues in beta-D-galactosides.. The polypeptide is Beta-galactosidase 11 (BGAL11) (Arabidopsis thaliana (Mouse-ear cress)).